A 424-amino-acid polypeptide reads, in one-letter code: Histidine--tRNA ligase (424 aa).

It belongs to the class-II aminoacyl-tRNA synthetase family. As to quaternary structure, homodimer.

The protein resides in the cytoplasm. The enzyme catalyses tRNA(His) + L-histidine + ATP = L-histidyl-tRNA(His) + AMP + diphosphate + H(+). This chain is Histidine--tRNA ligase, found in Sodalis glossinidius (strain morsitans).